Reading from the N-terminus, the 86-residue chain is Small ribosomal subunit protein uS17 (86 aa).

Belongs to the universal ribosomal protein uS17 family. In terms of assembly, part of the 30S ribosomal subunit.

Its function is as follows. One of the primary rRNA binding proteins, it binds specifically to the 5'-end of 16S ribosomal RNA. The sequence is that of Small ribosomal subunit protein uS17 from Streptococcus pyogenes serotype M3 (strain ATCC BAA-595 / MGAS315).